The following is an 869-amino-acid chain: Leucine--tRNA ligase (869 aa).

The 'HIGH' region motif lies at 42 to 52; sequence PYPSGRLHMGH. The 'KMSKS' region motif lies at 620–624; sequence KMSKS. Lysine 623 provides a ligand contact to ATP.

This sequence belongs to the class-I aminoacyl-tRNA synthetase family.

It localises to the cytoplasm. The enzyme catalyses tRNA(Leu) + L-leucine + ATP = L-leucyl-tRNA(Leu) + AMP + diphosphate. In Hamiltonella defensa subsp. Acyrthosiphon pisum (strain 5AT), this protein is Leucine--tRNA ligase.